The primary structure comprises 269 residues: Tryptophan synthase alpha chain (269 aa).

Active-site proton acceptor residues include glutamate 41 and aspartate 52.

This sequence belongs to the TrpA family. As to quaternary structure, tetramer of two alpha and two beta chains.

It carries out the reaction (1S,2R)-1-C-(indol-3-yl)glycerol 3-phosphate + L-serine = D-glyceraldehyde 3-phosphate + L-tryptophan + H2O. Its pathway is amino-acid biosynthesis; L-tryptophan biosynthesis; L-tryptophan from chorismate: step 5/5. Functionally, the alpha subunit is responsible for the aldol cleavage of indoleglycerol phosphate to indole and glyceraldehyde 3-phosphate. The chain is Tryptophan synthase alpha chain from Geobacillus stearothermophilus (Bacillus stearothermophilus).